Consider the following 658-residue polypeptide: Transmembrane 9 superfamily member 11 (658 aa).

The signal sequence occupies residues 1 to 23 (MRSMDRFGIWVLAILLVIQSSFG). The Lumenal portion of the chain corresponds to 24–291 (FYLPGSYPHK…LKMEGSKVHW (268 aa)). Residues 292 to 312 (FSILNSLMVITFLAGIVLVIF) form a helical membrane-spanning segment. The Cytoplasmic portion of the chain corresponds to 313–364 (LRTVRRDLTRYEELDKEAQAQMNEELSGWKLVVGDVFRAPSNASLLCVMVGD). A helical membrane pass occupies residues 365–385 (GVQILGMAVVTILFAALGFMS). Residues 386–391 (PASRGT) are Lumenal-facing. A helical transmembrane segment spans residues 392 to 412 (LITGMLFFYMILGIAAGYVSV). Topologically, residues 413–432 (RLWRTIGCGEHRGWMSVAWK) are cytoplasmic. Residues 433–453 (AACFFPGIAFLILTTLNFLLW) traverse the membrane as a helical segment. Over 454-462 (GSHSTGAIP) the chain is Lumenal. Residues 463-483 (FSLFVILLLLWFCISVPLTLI) traverse the membrane as a helical segment. Residues 484 to 515 (GGYFGAKAPHIEFPVRTNQIPREIPAQKYPSW) are Cytoplasmic-facing. A helical membrane pass occupies residues 516–536 (LLVLGAGTLPFGTLFIELFFI). Topologically, residues 537–547 (MSSIWMGRVYY) are lumenal. A helical membrane pass occupies residues 548 to 568 (VFGFLFVVLILLVVVCAEVSL). Residues 569-586 (VLTYMHLCVEDYKWWWKS) are Cytoplasmic-facing. A helical membrane pass occupies residues 587–607 (FFASGSVAIYIFIYSINYLVF). Residues 608 to 619 (DLKSLSGPVSAT) lie on the Lumenal side of the membrane. Residues 620–640 (LYLGYSLFMVLAIMLATGTVG) traverse the membrane as a helical segment. Residues 641–658 (FLSSFWFVHYLFSSVKLD) are Cytoplasmic-facing. The Endoplasmic reticulum export signal signature appears at 647–652 (FVHYLF). The Golgi retention signal signature appears at 656–658 (KLD).

The protein belongs to the nonaspanin (TM9SF) (TC 9.A.2) family.

The protein resides in the endosome membrane. The protein localises to the golgi apparatus membrane. The polypeptide is Transmembrane 9 superfamily member 11 (Arabidopsis thaliana (Mouse-ear cress)).